The primary structure comprises 306 residues: MSEISDAEKRRILREKRQQKFNKGGASSRLAKITGQTENSFLSTESPLDSRESTYPAQETKAPAGNEDSTKQMDELLAKATSKTTSKASSPPGSAEQQNGNPELDLFAQIAKLQQNANNETVSTDPSGTPDIFAQLMASMQQDEAKGGSPGATAQQPIDPAIVEAHNIAVNKLKSYTILVKWLFFLLPYLYYITHSARDPFQHNAVNYVLDRSNFFTVFTTFEIVALSVYYQLLMSAEKSHNVNTLDNNSKILKLVSMVPPGLVPIPNLRGKVAQALQYWDVVSMYLTDLCFAIVLAGLFQYYHSM.

The span at M1–Q18 shows a compositional bias: basic and acidic residues. The tract at residues M1 to G100 is disordered. Residues M1–K172 are Cytoplasmic-facing. The segment covering T34 to A57 has biased composition (polar residues). Residues D68–L77 show a composition bias toward basic and acidic residues. A compositionally biased stretch (low complexity) spans A78–S90. Polar residues predominate over residues P91–G100. Residues L173–I193 traverse the membrane as a helical segment. Residues T194–N214 are Lumenal-facing. A helical transmembrane segment spans residues F215–L234. Topologically, residues M235–D281 are cytoplasmic. Residues V282–Y302 traverse the membrane as a helical segment. Over Y303–M306 the chain is Lumenal.

It belongs to the GET2 family. Component of the Golgi to ER traffic (GET) complex, which is composed of GET1, GET2 and GET3. Within the complex, GET1 and GET2 form a heterotetramer which is stabilized by phosphatidylinositol binding and which binds to the GET3 homodimer.

It is found in the endoplasmic reticulum membrane. The protein localises to the golgi apparatus membrane. Required for the post-translational delivery of tail-anchored (TA) proteins to the endoplasmic reticulum. Together with GET1, acts as a membrane receptor for soluble GET3, which recognizes and selectively binds the transmembrane domain of TA proteins in the cytosol. The GET complex cooperates with the HDEL receptor ERD2 to mediate the ATP-dependent retrieval of resident ER proteins that contain a C-terminal H-D-E-L retention signal from the Golgi to the ER. The polypeptide is Golgi to ER traffic protein 2 (Lachancea thermotolerans (strain ATCC 56472 / CBS 6340 / NRRL Y-8284) (Yeast)).